Consider the following 120-residue polypeptide: Protein GP96 (120 aa).

This sequence belongs to the herpesviridae UL96 family.

This Cavia porcellus (Guinea pig) protein is Protein GP96.